We begin with the raw amino-acid sequence, 122 residues long: NADH-quinone oxidoreductase subunit A (122 aa).

The next 3 helical transmembrane spans lie at 10-30 (MIVLIFLLLGILLPVVALTLG), 66-86 (IFALLFVIFDVETLFLYPWAV), and 91-111 (LGLFALIEMLIFVVMLLVGLA).

The protein belongs to the complex I subunit 3 family. In terms of assembly, NDH-1 is composed of 14 different subunits. Subunits NuoA, H, J, K, L, M, N constitute the membrane sector of the complex.

The protein localises to the cell membrane. The catalysed reaction is a quinone + NADH + 5 H(+)(in) = a quinol + NAD(+) + 4 H(+)(out). NDH-1 shuttles electrons from NADH, via FMN and iron-sulfur (Fe-S) centers, to quinones in the respiratory chain. The immediate electron acceptor for the enzyme in this species is believed to be a menaquinone. Couples the redox reaction to proton translocation (for every two electrons transferred, four hydrogen ions are translocated across the cytoplasmic membrane), and thus conserves the redox energy in a proton gradient. This is NADH-quinone oxidoreductase subunit A from Bacillus mycoides (strain KBAB4) (Bacillus weihenstephanensis).